A 399-amino-acid chain; its full sequence is Elongation factor Tu (399 aa).

Residues 10–204 (KPHVNIGTIG…AVDASIPEPE (195 aa)) enclose the tr-type G domain. The G1 stretch occupies residues 19 to 26 (GHVDHGKT). 19-26 (GHVDHGKT) contacts GTP. Threonine 26 serves as a coordination point for Mg(2+). A G2 region spans residues 60–64 (GITIN). A G3 region spans residues 81-84 (DCPG). Residues 81–85 (DCPGH) and 136–139 (NKCD) contribute to the GTP site. Residues 136 to 139 (NKCD) form a G4 region. The segment at 174–176 (SGL) is G5.

Belongs to the TRAFAC class translation factor GTPase superfamily. Classic translation factor GTPase family. EF-Tu/EF-1A subfamily. In terms of assembly, monomer.

The protein resides in the cytoplasm. It carries out the reaction GTP + H2O = GDP + phosphate + H(+). Its function is as follows. GTP hydrolase that promotes the GTP-dependent binding of aminoacyl-tRNA to the A-site of ribosomes during protein biosynthesis. This is Elongation factor Tu from Prochlorococcus marinus (strain MIT 9312).